The sequence spans 1293 residues: Enterobactin synthase component F (1293 aa).

An elongation/condensation region spans residues 1 to 301; sequence MSQHLPLVAA…NVLPLGIHIA (301 aa). Residues 482–887 are adenylatione; the sequence is SYREMREQVV…ALPDVEQAVT (406 aa). The region spanning 971–1046 is the Carrier domain; that stretch reads APKAGSETII…KLATIIDAEE (76 aa). Serine 1006 carries the O-(pantetheine 4'-phosphoryl)serine modification. Residues 1066 to 1293 are thioesterase; sequence PTLFCFHPAS…GPIIRATLNR (228 aa). The active-site Proton acceptor; for thioesterase activity is histidine 1271.

This sequence belongs to the ATP-dependent AMP-binding enzyme family. EntF subfamily. As to quaternary structure, proteins EntB, EntD, EntE and EntF are the component of the enterobactin synthase. Components probably do not form a stable complex. EntF acts as a catalytic monomer. Interacts with the MbtH-like protein YbdZ. YbdZ binds to the adenylation domain, but does not alter the structure of the domain. It depends on pantetheine 4'-phosphate as a cofactor. Post-translationally, 4'-phosphopantetheine is transferred from CoA to a specific serine of apo-EntF by EntD. Holo-EntF so formed is then acylated with seryl-AMP.

It is found in the cytoplasm. The catalysed reaction is 3 2,3-dihydroxybenzoate + 3 L-serine + 6 ATP = enterobactin + 6 AMP + 6 diphosphate + 4 H(+). The enzyme catalyses holo-[peptidyl-carrier protein] + L-serine + ATP = L-seryl-[peptidyl-carrier protein] + AMP + diphosphate. Its pathway is siderophore biosynthesis; enterobactin biosynthesis. Adenylation activity is increased in the presence of the MbtH-like protein YbdZ. Functionally, involved in the biosynthesis of the siderophore enterobactin (enterochelin), which is a macrocyclic trimeric lactone of N-(2,3-dihydroxybenzoyl)-serine. EntF catalyzes the activation of L-serine via ATP-dependent PPi exchange reaction to form seryladenylate. Activated L-serine is loaded onto the peptidyl carrier domain via a thioester linkage to the phosphopanthetheine moiety, forming seryl-S-Ppant-EntF. EntF acts then as the sole catalyst for the formation of the three amide and three ester linkages found in enterobactin, using seryladenylate and 2,3-dihydroxybenzoate-S-Ppant-EntB (DHB-S-Ppant-EntB) as substrates, via the formation of a DHB-Ser-S-Ppant-EntF intermediate. This chain is Enterobactin synthase component F, found in Escherichia coli (strain K12).